The following is a 245-amino-acid chain: Pathogenesis-related thaumatin-like protein 3.6 (245 aa).

The first 19 residues, 1 to 19 (GSIPFWIALIASFSVFLQG), serve as a signal peptide directing secretion. 8 disulfide bridges follow: Cys-33–Cys-226, Cys-74–Cys-84, Cys-89–Cys-95, Cys-142–Cys-215, Cys-148–Cys-198, Cys-156–Cys-166, Cys-170–Cys-179, and Cys-180–Cys-185. Residue Asn-90 is glycosylated (N-linked (GlcNAc...) asparagine). The N-linked (GlcNAc...) asparagine glycan is linked to Asn-186.

It belongs to the thaumatin family. Mostly expressed in strobili, and, to a lower extent, in roots of seedlings and saplings.

Functionally, may be involved in disease resistance. In Cryptomeria japonica (Japanese cedar), this protein is Pathogenesis-related thaumatin-like protein 3.6.